We begin with the raw amino-acid sequence, 1434 residues long: DNA-directed RNA polymerase subunit beta (1434 aa).

Belongs to the RNA polymerase beta chain family. The RNAP catalytic core consists of 2 alpha, 1 beta, 1 beta' and 1 omega subunit. When a sigma factor is associated with the core the holoenzyme is formed, which can initiate transcription.

The enzyme catalyses RNA(n) + a ribonucleoside 5'-triphosphate = RNA(n+1) + diphosphate. In terms of biological role, DNA-dependent RNA polymerase catalyzes the transcription of DNA into RNA using the four ribonucleoside triphosphates as substrates. This is DNA-directed RNA polymerase subunit beta from Ureaplasma parvum serovar 3 (strain ATCC 27815 / 27 / NCTC 11736).